Here is a 303-residue protein sequence, read N- to C-terminus: RELT-like protein 2 (303 aa).

A helical membrane pass occupies residues 15 to 35 (LYMLFLLVLVFFLMGLVGFMI). Disordered stretches follow at residues 46-67 (CRTS…DDDM) and 132-303 (CLHC…AGSM). S52 carries the post-translational modification Phosphoserine. Composition is skewed to basic and acidic residues over residues 148–158 (RSKEGKSRPRT) and 172–188 (THIE…DGSP). The span at 194–212 (GSGGGQDPGGGQGSGGGQP) shows a compositional bias: gly residues. Residues 278-296 (QEANGQPSKPDTSDHQVSL) are compositionally biased toward polar residues.

This sequence belongs to the RELT family. Interacts with RELT, RELL1 and OXSR1. Interacts with PLSCR1. Interacts with TRAF2. In terms of processing, phosphorylated in vitro by OXSR1. Primarily expressed in spleen, thymus, testis, peripheral blood leukocytes, brain and placenta. Not detected in prostate, ovary, small intestine, colon, heart, lung, liver, skeletal muscle, kidney and pancreas.

The protein localises to the cell membrane. In terms of biological role, induces activation of MAPK14/p38 cascade, when overexpressed. Induces apoptosis, when overexpressed. The chain is RELT-like protein 2 (RELL2) from Homo sapiens (Human).